A 182-amino-acid polypeptide reads, in one-letter code: ATP-dependent protease subunit HslV (182 aa).

The active site involves threonine 6. Residues alanine 164, cysteine 167, and threonine 170 each coordinate Na(+).

It belongs to the peptidase T1B family. HslV subfamily. A double ring-shaped homohexamer of HslV is capped on each side by a ring-shaped HslU homohexamer. The assembly of the HslU/HslV complex is dependent on binding of ATP.

It localises to the cytoplasm. The catalysed reaction is ATP-dependent cleavage of peptide bonds with broad specificity.. Its activity is regulated as follows. Allosterically activated by HslU binding. Functionally, protease subunit of a proteasome-like degradation complex believed to be a general protein degrading machinery. This is ATP-dependent protease subunit HslV from Borreliella burgdorferi (strain ATCC 35210 / DSM 4680 / CIP 102532 / B31) (Borrelia burgdorferi).